Reading from the N-terminus, the 92-residue chain is Cell division topological specificity factor (92 aa).

It belongs to the MinE family.

Its function is as follows. Prevents the cell division inhibition by proteins MinC and MinD at internal division sites while permitting inhibition at polar sites. This ensures cell division at the proper site by restricting the formation of a division septum at the midpoint of the long axis of the cell. The sequence is that of Cell division topological specificity factor from Symbiobacterium thermophilum (strain DSM 24528 / JCM 14929 / IAM 14863 / T).